A 225-amino-acid polypeptide reads, in one-letter code: PKHD-type hydroxylase HEAR3399 (225 aa).

In terms of domain architecture, Fe2OG dioxygenase spans 77 to 177 (RYMPPLFNRY…RVCSFFWLQS (101 aa)). Residues histidine 95, aspartate 97, and histidine 158 each coordinate Fe cation. Arginine 168 lines the 2-oxoglutarate pocket.

Requires Fe(2+) as cofactor. It depends on L-ascorbate as a cofactor.

The polypeptide is PKHD-type hydroxylase HEAR3399 (Herminiimonas arsenicoxydans).